The following is a 529-amino-acid chain: Peptide chain release factor 3 (529 aa).

Residues 11 to 280 (AKRRTFAIIS…GLIEWAPQPM (270 aa)) enclose the tr-type G domain. Residues 20–27 (SHPDAGKT), 88–92 (DTPGH), and 142–145 (NKLD) each bind GTP.

Belongs to the TRAFAC class translation factor GTPase superfamily. Classic translation factor GTPase family. PrfC subfamily.

It localises to the cytoplasm. Its function is as follows. Increases the formation of ribosomal termination complexes and stimulates activities of RF-1 and RF-2. It binds guanine nucleotides and has strong preference for UGA stop codons. It may interact directly with the ribosome. The stimulation of RF-1 and RF-2 is significantly reduced by GTP and GDP, but not by GMP. The protein is Peptide chain release factor 3 of Enterobacter sp. (strain 638).